Here is a 4749-residue protein sequence, read N- to C-terminus: E3 ubiquitin-protein ligase MYCBP2 (4749 aa).

3 disordered regions span residues 87 to 127, 170 to 192, and 609 to 628; these read DRDQ…RSKS, AASK…SREP, and ASKG…KPYK. Basic residues predominate over residues 100–124; that stretch reads SRNKKILNKKKLKRKQKSKSKVKTR. Serine 127, serine 178, serine 181, and serine 183 each carry phosphoserine. 5 RCC1 repeats span residues 600 to 655, 699 to 755, 907 to 957, 958 to 1009, and 1011 to 1066; these read DGSV…VISK, NGEV…MMCP, KRDK…VLME, NGDV…LLMD, and QVFT…LRID. The span at 899-910 shows a compositional bias: basic residues; it reads SHPAQLKHKRDK. The segment at 899–928 is disordered; it reads SHPAQLKHKRDKHKDGSGDRGEKDASKITT. A compositionally biased stretch (basic and acidic residues) spans 911–924; that stretch reads HKDGSGDRGEKDAS. The interval 1235–1386 is PHR domain 1; that stretch reads NRFESHGGGW…GQIPQLLYRL (152 aa). Residue serine 1621 is modified to Phosphoserine. Residues 1723 to 1881 are PHR domain 2; that stretch reads NRFTKTSQGR…GQIPQILYYR (159 aa). Residues cysteine 1745 and cysteine 1860 are joined by a disulfide bond. The segment at 2018 to 2544 is RAE1 binding; the sequence is AVIESEHPYK…FNQHLGKSLL (527 aa). Disordered stretches follow at residues 2313-2336 and 2780-3084; these read KKTS…SAAA and QQRQ…KGDG. A Filamin repeat occupies 2331–2438; the sequence is SPSAAASSAD…IDAGLEVKVK (108 aa). A compositionally biased stretch (polar residues) spans 2780 to 2803; sequence QQRQLQSDRGTISTSSRPVSTSGK. Positions 2814–2832 are enriched in basic and acidic residues; sequence VKPDGHVSRTPADQKKPRG. Serine 2841 carries the phosphoserine modification. Residues 2847–2857 are compositionally biased toward basic and acidic residues; it reads DAAKLRSDSHS. The span at 2858 to 2879 shows a compositional bias: polar residues; it reads RSLSPNHNTLQTLKSDGRTSSG. 2 positions are modified to phosphoserine: serine 2859 and serine 2861. 2 stretches are compositionally biased toward low complexity: residues 2884–2894 and 2904–2917; these read SPGPGSRSSSP and SSPS…SSSP. Serine 2905 and serine 2911 each carry phosphoserine. The span at 2918 to 2929 shows a compositional bias: polar residues; sequence QDKNLPQKSTAP. Basic and acidic residues predominate over residues 2932-2943; the sequence is TKLDPPRERSKS. Residues serine 2941, serine 2943, and serine 2992 each carry the phosphoserine modification. Residues 3008–3021 are compositionally biased toward polar residues; that stretch reads CTSSTLKTNGVTDS. Basic and acidic residues-rich tracts occupy residues 3027–3037 and 3047–3056; these read GDLKSVDEGSN and PLKDEQEMRA. Serine 3057 is subject to Phosphoserine. Residues 3060–3073 show a composition bias toward basic residues; it reads ISRKCANRHTRPKK. Phosphoserine is present on residues serine 3162, serine 3550, and serine 3577. The tract at residues 3677–3700 is disordered; it reads VEAEEDEDEDNKSNKENAEQEKDT. Residues 3687–3700 are compositionally biased toward basic and acidic residues; that stretch reads NKSNKENAEQEKDT. The 179-residue stretch at 3789-3967 folds into the DOC domain; it reads FSISVQSGFE…SVAQQRSCEA (179 aa). Residues 3986–4007 form a disordered region; the sequence is SGDAEPTPEQEEKALLSSPEGE. Threonine 3992 carries the post-translational modification Phosphothreonine. 2 positions are modified to phosphoserine: serine 4002 and serine 4003. The Zn(2+) site is built by cysteine 4499, cysteine 4502, cysteine 4517, histidine 4519, histidine 4522, cysteine 4525, cysteine 4546, cysteine 4549, cysteine 4615, and cysteine 4618. The RING-type; atypical zinc-finger motif lies at 4499-4550; the sequence is CMICFTEALSAAPAIQLDCSHVFHLQCCRRVLENRWLGPRITFGFISCPICK. A tandem cysteine domain region spans residues 4610 to 4747; sequence YAYYVCYKCR…LGCGVCRNAH (138 aa). The active site involves cysteine 4629. Zn(2+) contacts are provided by cysteine 4646, cysteine 4649, cysteine 4658, histidine 4661, cysteine 4670, cysteine 4673, and cysteine 4674. Cysteine 4681 is a catalytic residue. Residues cysteine 4688, cysteine 4691, cysteine 4709, cysteine 4723, histidine 4729, cysteine 4740, and cysteine 4743 each contribute to the Zn(2+) site.

This sequence belongs to the RING-Cys relay (RCR) family. As to quaternary structure, interacts with MYC. Interacts with TSC2 (tuberin) when TSC2 is in complex with TSC1 (hamartin). Interacts with FBXO45. Interacts with RAE1. Interacts with CPNE1 (via VWFA domain) and CPNE4 (via VWFA domain). Interacts with (sumoylated) RANGAP1; interaction with sumoylated RANGAP1 inhibits E3 ubiquitin-protein ligase activity and promotes MYCBP2 translocation to the nucleus. Interacts with RAN. Interacts with ATP13A2; the interaction inhibits the ubiquitination of TSC2 by MYCBP2. Interacts with USP11. In terms of processing, autoubiquitinated. Expression is mostly restricted to the nervous system, including expression in motor and sensory axons. During postnatal development, expression is particularly strong in the cerebellum, hippocampus and retina. Lower levels of expression are observed throughout the cerebral cortex.

It localises to the nucleus. The protein resides in the cell projection. The protein localises to the axon. Its subcellular location is the cytoplasm. It is found in the cytoskeleton. The enzyme catalyses [E2 ubiquitin-conjugating enzyme]-S-ubiquitinyl-L-cysteine + [acceptor protein]-L-threonine = [E2 ubiquitin-conjugating enzyme]-L-cysteine + [acceptor protein]-3-O-ubiquitinyl-L-threonine.. It functions in the pathway protein modification; protein ubiquitination. Functionally, atypical E3 ubiquitin-protein ligase which specifically mediates ubiquitination of threonine and serine residues on target proteins, instead of ubiquitinating lysine residues. Shows esterification activity towards both threonine and serine, with a preference for threonine, and acts via two essential catalytic cysteine residues that relay ubiquitin to its substrate via thioester intermediates. Interacts with the E2 enzymes UBE2D1, UBE2D3, UBE2E1 and UBE2L3. Plays a key role in neural development, probably by mediating ubiquitination of threonine residues on target proteins. Involved in different processes such as regulation of neurite outgrowth, synaptic growth, synaptogenesis and axon degeneration. Required for the formation of major central nervous system axon tracts. Required for proper axon growth by regulating axon navigation and axon branching: acts by regulating the subcellular location and stability of MAP3K12/DLK. Required for proper localization of retinogeniculate projections but not for eye-specific segregation. Regulates axon guidance in the olfactory system. Involved in Wallerian axon degeneration, an evolutionarily conserved process that drives the loss of damaged axons: acts by promoting destabilization of NMNAT2, probably via ubiquitination of NMNAT2. Catalyzes ubiquitination of threonine and/or serine residues on NMNAT2, consequences of threonine and/or serine ubiquitination are however unknown. Regulates the internalization of TRPV1 in peripheral sensory neurons. May mediate ubiquitination and subsequent proteasomal degradation of TSC2/tuberin. Independently of the E3 ubiquitin-protein ligase activity, also acts as a guanosine exchange factor (GEF) for RAN in neurons of dorsal root ganglia. May function as a facilitator or regulator of transcriptional activation by MYC. Acts in concert with HUWE1 to regulate the circadian clock gene expression by promoting the lithium-induced ubiquination and degradation of NR1D1. In Mus musculus (Mouse), this protein is E3 ubiquitin-protein ligase MYCBP2.